The primary structure comprises 67 residues: Small integral membrane protein 20 (67 aa).

The Mitochondrial matrix segment spans residues 1 to 6 (MSRNLR). Residues 7-27 (TALIFGGFISLIGAAFYPIYF) form a helical membrane-spanning segment. The Mitochondrial intermembrane segment spans residues 28-67 (RPLMRLEEYKKEQAINRAGIVQEDVQPPGLKVWSDPFGRK). Phe64 bears the Phenylalanine amide mark.

Component of the MITRAC (mitochondrial translation regulation assembly intermediate of cytochrome c oxidase complex) complex, the core components of this complex being COA3/MITRAC12 and COX14. Interacts with COA3/MITRAC12 and COX4I1. Directly interacts with newly synthesized MT-CO1/COX1. Expressed in the ovary, specifically in granulosa cells of follicles that have passed the primary stage and in oocytes (at protein level).

The protein localises to the mitochondrion inner membrane. It is found in the secreted. In terms of biological role, component of the MITRAC (mitochondrial translation regulation assembly intermediate of cytochrome c oxidase complex) complex, that regulates cytochrome c oxidase assembly. Promotes the progression of complex assembly after the association of MT-CO1/COX1 with COX4I1 and COX6C. Chaperone-like assembly factor required to stabilize newly synthesized MT-CO1/COX1 and to prevent its premature turnover. Functionally, peptide involved in a broad spectrum of regulatory functions. Is a ligand for GPR173. As part of the reproductive cycle, it regulates gonadotropin-releasing hormone (GnRH) signaling in the hypothalamus and pituitary gland which augments the release of luteinizing hormone. Plays a protective role in memory retention through activation of GNRHR. Regulates the secretion of AVP by hypothalamic neurons. Plays a role in the transduction of the itch sensation. Induces anxiolytic effects, reducing behavior associated with anxiety. Regulates food intake as well as satiation and satiety. In the ovary, it regulates follicular growth by stimulating granulosa cell proliferation by increasing the expression of GPR173, CREB1, CYP19A1, KITLG, FSHR, and LHCGR. It also increases the production of estradiol (E2). In the heart, it regulates contractility and relaxation. It also plays a cardioprotective role during ischemia, where it activates the SAFE and RISK pathways. Stimulates the proliferation and differentiation of preadipocytes. In pancreatic islet cells, it induces proliferation of islet cells as well as the production of INS. The chain is Small integral membrane protein 20 (SMIM20) from Homo sapiens (Human).